A 394-amino-acid polypeptide reads, in one-letter code: MNKKTLKDIDVKGKVVFCRVDFNVPMKDGEVTDDTRIRAALPTIKHLADQGAKVLLASHLGRPKGEVVEELRLTPVAARLGELLGKEVKKADEAYGDAVKAQISEMKDGDVLVLENVRFYPGEEKNDPELAKAFAELADVYVNDAFGAAHRAHASTAGIAEHLPAVAGFLMEKELDVLGKAVSNPDRPFTAIIGGAKVKDKIGVIESLLDKVDNLIIGGGLAYTFVKALGYEVGKSLLEEDKIELAKSFMDRAKEKGVNFYMPEDVLVADDFSNDANVKIVPISEIPSDLEAIDIGTKTRETYADVIKNSKLVVWNGPMGVFEIDLFAQGTKAVAEALAEAKDTYSVIGGGDSAAAVEKFGLADKMSHISTGGGASLEFMEGKELPGVAALNDK.

Residues 21 to 23, arginine 36, 59 to 62, arginine 118, and arginine 151 each bind substrate; these read DFN and HLGR. Serine 183 is subject to Phosphoserine. Position 201 (lysine 201) interacts with ATP. Threonine 299 bears the Phosphothreonine mark. ATP-binding positions include glutamate 323 and 350 to 353; that span reads GGDS.

The protein belongs to the phosphoglycerate kinase family. As to quaternary structure, monomer.

The protein localises to the cytoplasm. The catalysed reaction is (2R)-3-phosphoglycerate + ATP = (2R)-3-phospho-glyceroyl phosphate + ADP. It participates in carbohydrate degradation; glycolysis; pyruvate from D-glyceraldehyde 3-phosphate: step 2/5. This is Phosphoglycerate kinase (pgk) from Bacillus subtilis (strain 168).